The following is a 461-amino-acid chain: GTPase Der (461 aa).

2 EngA-type G domains span residues 9–171 (KTIA…DLNQ) and 200–371 (IQVG…ECFS). GTP contacts are provided by residues 15 to 22 (GQPNVGKS), 62 to 66 (DTGGM), 123 to 126 (NKID), 206 to 213 (GRVNVGKS), 253 to 257 (DTAGI), and 317 to 320 (NKWD). In terms of domain architecture, KH-like spans 372-456 (KRIPTSLLNS…PLILNAKDKK (85 aa)).

It belongs to the TRAFAC class TrmE-Era-EngA-EngB-Septin-like GTPase superfamily. EngA (Der) GTPase family. Associates with the 50S ribosomal subunit.

Functionally, GTPase that plays an essential role in the late steps of ribosome biogenesis. In Helicobacter pylori (strain Shi470), this protein is GTPase Der.